Consider the following 463-residue polypeptide: Argininosuccinate lyase (463 aa).

It belongs to the lyase 1 family. Argininosuccinate lyase subfamily.

It localises to the cytoplasm. The catalysed reaction is 2-(N(omega)-L-arginino)succinate = fumarate + L-arginine. Its pathway is amino-acid biosynthesis; L-arginine biosynthesis; L-arginine from L-ornithine and carbamoyl phosphate: step 3/3. The sequence is that of Argininosuccinate lyase from Thermosynechococcus vestitus (strain NIES-2133 / IAM M-273 / BP-1).